The following is a 299-amino-acid chain: MGQKIHPVGFRLPVTRNWSSRWYASNRNFATMLAEDLKVREYLKAKLKSAAVSRILIERPAKNARITIYSARPGVVIGKKGEDIENLKAELTRRLGVPVAVNIEEVRKPEIDAQLIADSITQQLEKRIMFRRAMKRAMQNAMRLGAQGIKIMSAGRLNGIEIARTEWYREGRVPLHTLRADIDYGFSEAKTTYGIIGVKVWVYRGDRLANGEAPVIKTDEREDDRRNRRGPRSDRPAGDRRPPSRDGARPGPRGPRADAGAAAPTDKPADGAAPAAADGPKAAVKRVRKAVAPGDAKGE.

The 69-residue stretch at 39–107 (VREYLKAKLK…PVAVNIEEVR (69 aa)) folds into the KH type-2 domain. Residues 214 to 299 (PVIKTDERED…AVAPGDAKGE (86 aa)) are disordered. Residues 217–248 (KTDEREDDRRNRRGPRSDRPAGDRRPPSRDGA) are compositionally biased toward basic and acidic residues. Positions 257–282 (ADAGAAAPTDKPADGAAPAAADGPKA) are enriched in low complexity.

This sequence belongs to the universal ribosomal protein uS3 family. In terms of assembly, part of the 30S ribosomal subunit. Forms a tight complex with proteins S10 and S14.

Binds the lower part of the 30S subunit head. Binds mRNA in the 70S ribosome, positioning it for translation. The protein is Small ribosomal subunit protein uS3 of Methylibium petroleiphilum (strain ATCC BAA-1232 / LMG 22953 / PM1).